We begin with the raw amino-acid sequence, 324 residues long: Beta-ketoacyl-[acyl-carrier-protein] synthase III (324 aa).

Active-site residues include cysteine 112 and histidine 249. The interval 250–254 (QANIR) is ACP-binding. Asparagine 279 is an active-site residue.

Belongs to the thiolase-like superfamily. FabH family. As to quaternary structure, homodimer.

It is found in the cytoplasm. It carries out the reaction malonyl-[ACP] + acetyl-CoA + H(+) = 3-oxobutanoyl-[ACP] + CO2 + CoA. The protein operates within lipid metabolism; fatty acid biosynthesis. Functionally, catalyzes the condensation reaction of fatty acid synthesis by the addition to an acyl acceptor of two carbons from malonyl-ACP. Catalyzes the first condensation reaction which initiates fatty acid synthesis and may therefore play a role in governing the total rate of fatty acid production. Possesses both acetoacetyl-ACP synthase and acetyl transacylase activities. Its substrate specificity determines the biosynthesis of branched-chain and/or straight-chain of fatty acids. The protein is Beta-ketoacyl-[acyl-carrier-protein] synthase III of Streptococcus sanguinis (strain SK36).